The chain runs to 299 residues: Ankyrin repeat domain-containing protein 54 (299 aa).

A disordered region spans residues 1 to 27 (MAATGGGAEDESRSGRSSSEGECAVAP). Residue Ala2 is modified to N-acetylalanine. Phosphoserine is present on Ser62. The Nuclear localization signal (NLS) signature appears at 98-116 (RRLGPTGKEVHALKRLRDS). 4 ANK repeats span residues 108–137 (HALK…DPCA), 141–170 (KGRT…DPNQ), 174–203 (LGNT…RVDA), and 207–239 (AGRT…EVKQ). An LYN-binding region spans residues 140 to 240 (DKGRTALHFA…EAVRLEVKQI (101 aa)). The Nuclear export signal (NES) motif lies at 282–292 (LLASFTSLSLQ).

Interacts (via ankyrin repeat region) with LYN (via SH3-domain) in an activation-independent status of LYN. Forms a multiprotein complex with LYN and HCLS1. Interacts with TSN2, VAV1, DBNL and LASP1.

It localises to the nucleus. The protein resides in the cytoplasm. Its subcellular location is the midbody. Functionally, plays an important role in regulating intracellular signaling events associated with erythroid terminal differentiation. This is Ankyrin repeat domain-containing protein 54 (Ankrd54) from Rattus norvegicus (Rat).